The following is a 702-amino-acid chain: MPINKSEKPESCDNVKVVVRCRPLNEREKSMCYKQAVSVDEMRGTITVHKTDSSNEPPKTFTFDTVFGPESKQLDVYNLTARPIIDSVLEGYNGTIFAYGQTGTGKTFTMEGVRAIPELRGIIPNSFAHIFGHIAKAEGDTRFLVRVSYLEIYNEEVRDLLGKDQTQRLEVKERPDVGVYIKDLSAYVVNNADDMDRIMTLGHKNRSVGATNMNEHSSRSHAIFTITIECSEKGIDGNMHVRMGKLHLVDLAGSERQAKTGATGQRLKEATKINLSLSTLGNVISALVDGKSTHVPYRNSKLTRLLQDSLGGNSKTMMCANIGPADYNYDETISTLRYANRAKNIKNKARINEDPKDALLRQFQKEIEELKKKLEEGEEISGSDISGSEEDDDEEGEIGEDGEKRKKRRDQAGKKKVSPDKMIEMQAKIDEERKALETKLDMEEEERNKARAELEKREKDLLKAQQEHQSLLEKLSALEKKVIVGGVDLLAKAEEQEKLLEESNMELEERRKRAEQLRRELEEKEQERLDIEEKYTSLQEEAQGKTKKLKKVWTMLMAAKSEMADLQQEHQGEIEGLLENIRQLSRELRLQMLIIDNFIPRDYQEMIENYVHWNEDIGEWQLKCVAYTGNNMRKQTPVPDKKEKDPFEVDLSHVYLAYTEESLRQSLMKLERPRTSKGKARPKTGRRKRSAKPETVIDSLLQ.

One can recognise a Kinesin motor domain in the interval 14-345 (NVKVVVRCRP…LRYANRAKNI (332 aa)). 100-107 (GQTGTGKT) lines the ATP pocket. Residues 355–593 (PKDALLRQFQ…LSRELRLQML (239 aa)) are a coiled coil. 2 disordered regions span residues 372-424 (KKLE…KMIE) and 667-702 (LMKL…SLLQ). The span at 376 to 400 (EGEEISGSDISGSEEDDDEEGEIGE) shows a compositional bias: acidic residues. Residues 410–424 (DQAGKKKVSPDKMIE) show a composition bias toward basic and acidic residues. The globular stretch occupies residues 600–702 (PRDYQEMIEN…PETVIDSLLQ (103 aa)). The span at 675 to 690 (TSKGKARPKTGRRKRS) shows a compositional bias: basic residues. Ser690 bears the Phosphoserine mark.

It belongs to the TRAFAC class myosin-kinesin ATPase superfamily. Kinesin family. Kinesin II subfamily. As to quaternary structure, heterodimer of KIF3A and KIF3B. Interacts with CIMAP3. Interacts with CLN3. Interacts with DCTN1. Interacts with FLCN. Interacts with AP3B1.

It localises to the cytoplasm. Its subcellular location is the cytoskeleton. The protein localises to the cell projection. It is found in the cilium. The protein resides in the microtubule organizing center. It localises to the centrosome. Its subcellular location is the centriole. In terms of biological role, microtubule-based anterograde translocator for membranous organelles. Plus end-directed microtubule sliding activity in vitro. Plays a role in primary cilia formation. Plays a role in centriole cohesion and subdistal appendage organization and function. Regulates the formation of the subdistal appendage via recruitment of DCTN1 to the centriole. Also required for ciliary basal feet formation and microtubule anchoring to mother centriole. This chain is Kinesin-like protein KIF3A (KIF3A), found in Pongo abelii (Sumatran orangutan).